The chain runs to 567 residues: Urease subunit alpha (567 aa).

The Urease domain occupies Gly129–Phe567. The Ni(2+) site is built by His134, His136, and Lys217. The residue at position 217 (Lys217) is an N6-carboxylysine. A substrate-binding site is contributed by His219. 2 residues coordinate Ni(2+): His246 and His272. The Proton donor role is filled by His320. A Ni(2+)-binding site is contributed by Asp360.

It belongs to the metallo-dependent hydrolases superfamily. Urease alpha subunit family. In terms of assembly, heterotrimer of UreA (gamma), UreB (beta) and UreC (alpha) subunits. Three heterotrimers associate to form the active enzyme. It depends on Ni cation as a cofactor. In terms of processing, carboxylation allows a single lysine to coordinate two nickel ions.

It is found in the cytoplasm. The catalysed reaction is urea + 2 H2O + H(+) = hydrogencarbonate + 2 NH4(+). Its pathway is nitrogen metabolism; urea degradation; CO(2) and NH(3) from urea (urease route): step 1/1. This is Urease subunit alpha from Proteus hauseri.